The following is a 475-amino-acid chain: UDP-N-acetylmuramate--L-alanine ligase (475 aa).

An ATP-binding site is contributed by 118–124 (GTHGKTT).

Belongs to the MurCDEF family.

The protein localises to the cytoplasm. The enzyme catalyses UDP-N-acetyl-alpha-D-muramate + L-alanine + ATP = UDP-N-acetyl-alpha-D-muramoyl-L-alanine + ADP + phosphate + H(+). It functions in the pathway cell wall biogenesis; peptidoglycan biosynthesis. In terms of biological role, cell wall formation. This is UDP-N-acetylmuramate--L-alanine ligase from Paracoccus denitrificans (strain Pd 1222).